Reading from the N-terminus, the 267-residue chain is MKAAVLTLAVLFLTGSQARHFWQQDEPPQSPWDRVKDLATVYVDSVKDSGRDYVSQFESSALGKQLNLKLLDNWDSLTSTVNKLREDLGPVTQEFWDNLEKETGWLRQEMSKDLEEVKAKVQPYLDDFQKKWQEEVKLYSQKLEPLRTEFQEGALQKLQDLQEKLSPLAEQVRDRARAHVDTLRTQLAPYSDELRQRLATRLEVLKESGGASLAEYHAKASEHLSALGEKAKPALEDLRQGLLPVLESFKVSFLSALEEYAKKLSSQ.

An N-terminal signal peptide occupies residues 1–18; that stretch reads MKAAVLTLAVLFLTGSQA. 2 tandem repeats follow at residues 68–89 and 90–111. The tract at residues 68–267 is 10 X approximate tandem repeats; that stretch reads LKLLDNWDSL…EEYAKKLSSQ (200 aa). Met110 carries the methionine sulfoxide modification. Residues 112–122 form a 3; half-length repeat; the sequence is KDLEEVKAKVQ. 5 tandem repeats follow at residues 123 to 144, 145 to 166, 167 to 188, 189 to 210, and 211 to 232. The stretch at 233 to 243 is one 9; half-length repeat; sequence PALEDLRQGLL. Copy 10 of the repeat occupies 244–267; it reads PVLESFKVSFLSALEEYAKKLSSQ.

Belongs to the apolipoprotein A1/A4/E family. In terms of assembly, homodimer. Interacts with APOA1BP and CLU. Component of a sperm activating protein complex (SPAP), consisting of APOA1, an immunoglobulin heavy chain, an immunoglobulin light chain and albumin. Interacts with NDRG1. Interacts with SCGB3A2. Interacts with NAXE and YJEFN3. In terms of processing, glycosylated. Post-translationally, palmitoylated. Phosphorylation sites are present in the extracellular medium.

The protein localises to the secreted. In terms of biological role, participates in the reverse transport of cholesterol from tissues to the liver for excretion by promoting cholesterol efflux from tissues and by acting as a cofactor for the lecithin cholesterol acyltransferase (LCAT). As part of the SPAP complex, activates spermatozoa motility. The polypeptide is Apolipoprotein A-I (APOA1) (Cebus imitator (Panamanian white-faced capuchin)).